Consider the following 615-residue polypeptide: MSHFPKLLSSQIAYDVARTMLDGFDKHYRLFREVSHQAKLKFEAGDWHGLQQIQRDRIAFYNERVRESSVILEDEYDAENIEDEIWQQIKLHYIGLLTNHHQPELAETFFNSVCTRILHRSYFNNDFIFVRPAISTEYIENEESPTRPTFRAYYPGSREGMAACFERIVHNFQLERPFEDLQRDIGYVVRAVGEHFGDLRIAPNFQIHTLSSLFFRNKAAFIIGRILNGDRTFPLAIPILHGPSGKLVLDTVLLKKEQLLILFSFTHSYFMVDMEIPSAYVTFLRDIMPRKPRAEIYTSLGLQKQGKNLFYRDFLHHLQHSSDKFIVAPGIRGLVMLVFTLPSYPYVFKVIRDVFPAPKETTRELVKSKYQLVKQHDRVGRMADTLEYSDVAFPLSRFDEALVREFEQHAPSMIEYQRAKDGGEEIVVRHVYIERRMTPLNIYLQEGSDAQVEHGVIEYGNAIKELIAANIFPGDMLYKNFGVTRHGRVVFYDYDEIEYLTDCNIRHVPQPRNEEEEMSGEVWYTVRPHDIFPETFRTFLLGDPRVGAAFLRHHADFFDPAMWQSHKDRLLAGHVHDFFAYHASDRFIHRYGAAAEPPATPPVKQPDAGPARRVA.

Residues 328 to 334 (APGIRGL) and Lys-349 contribute to the ATP site. Asp-384 is a catalytic residue. The interval 595–615 (AEPPATPPVKQPDAGPARRVA) is disordered.

The protein belongs to the AceK family.

The protein localises to the cytoplasm. It catalyses the reaction L-seryl-[isocitrate dehydrogenase] + ATP = O-phospho-L-seryl-[isocitrate dehydrogenase] + ADP + H(+). Bifunctional enzyme which can phosphorylate or dephosphorylate isocitrate dehydrogenase (IDH) on a specific serine residue. This is a regulatory mechanism which enables bacteria to bypass the Krebs cycle via the glyoxylate shunt in response to the source of carbon. When bacteria are grown on glucose, IDH is fully active and unphosphorylated, but when grown on acetate or ethanol, the activity of IDH declines drastically concomitant with its phosphorylation. The chain is Isocitrate dehydrogenase kinase/phosphatase from Cupriavidus taiwanensis (strain DSM 17343 / BCRC 17206 / CCUG 44338 / CIP 107171 / LMG 19424 / R1) (Ralstonia taiwanensis (strain LMG 19424)).